The primary structure comprises 403 residues: Cysteine desulfurase IscS (403 aa).

Residues 75–76 (AT), asparagine 155, glutamine 183, and 203–205 (SAH) contribute to the pyridoxal 5'-phosphate site. Lysine 206 is modified (N6-(pyridoxal phosphate)lysine). Pyridoxal 5'-phosphate is bound at residue threonine 243. Catalysis depends on cysteine 328, which acts as the Cysteine persulfide intermediate. A [2Fe-2S] cluster-binding site is contributed by cysteine 328.

It belongs to the class-V pyridoxal-phosphate-dependent aminotransferase family. NifS/IscS subfamily. Homodimer. Forms a heterotetramer with IscU, interacts with other sulfur acceptors. Pyridoxal 5'-phosphate is required as a cofactor.

It localises to the cytoplasm. It catalyses the reaction (sulfur carrier)-H + L-cysteine = (sulfur carrier)-SH + L-alanine. Its pathway is cofactor biosynthesis; iron-sulfur cluster biosynthesis. Master enzyme that delivers sulfur to a number of partners involved in Fe-S cluster assembly, tRNA modification or cofactor biosynthesis. Catalyzes the removal of elemental sulfur atoms from cysteine to produce alanine. Functions as a sulfur delivery protein for Fe-S cluster synthesis onto IscU, an Fe-S scaffold assembly protein, as well as other S acceptor proteins. The chain is Cysteine desulfurase IscS from Psychromonas ingrahamii (strain DSM 17664 / CCUG 51855 / 37).